The chain runs to 87 residues: Small ribosomal subunit protein bS20 (87 aa).

Belongs to the bacterial ribosomal protein bS20 family.

Binds directly to 16S ribosomal RNA. In Brachyspira hyodysenteriae (strain ATCC 49526 / WA1), this protein is Small ribosomal subunit protein bS20.